An 89-amino-acid chain; its full sequence is N.vectensis toxin 7 (89 aa).

An N-terminal signal peptide occupies residues 1–21 (MASFFKIAVICLVMLVVCSNA). Intrachain disulfides connect C44-C77, C46-C69, and C62-C78.

In terms of tissue distribution, expressed in ectodermal gland cells.

Functionally, probable toxin. This Nematostella vectensis (Starlet sea anemone) protein is N.vectensis toxin 7.